The following is a 108-amino-acid chain: MKVTEVKVFPVNEDRLKAYVSITLDNCFVVRDLKVIQGTSGLFVAMPSKKRKDGQFRDIAHPLNQETRAMIEDLIFEAYEKELKSMGETLVSLKRQKAPGSDYGNDDY.

The protein belongs to the SpoVG family.

Functionally, could be involved in septation. The polypeptide is Putative septation protein SpoVG (Bdellovibrio bacteriovorus (strain ATCC 15356 / DSM 50701 / NCIMB 9529 / HD100)).